A 1499-amino-acid chain; its full sequence is DNA-directed RNA polymerase subunit beta' (1499 aa).

Cysteine 67, cysteine 69, cysteine 82, and cysteine 85 together coordinate Zn(2+). 3 residues coordinate Mg(2+): aspartate 499, aspartate 501, and aspartate 503. Zn(2+) is bound by residues cysteine 867, cysteine 943, cysteine 950, and cysteine 953.

It belongs to the RNA polymerase beta' chain family. The RNAP catalytic core consists of 2 alpha, 1 beta, 1 beta' and 1 omega subunit. When a sigma factor is associated with the core the holoenzyme is formed, which can initiate transcription. The cofactor is Mg(2+). It depends on Zn(2+) as a cofactor.

It carries out the reaction RNA(n) + a ribonucleoside 5'-triphosphate = RNA(n+1) + diphosphate. Its function is as follows. DNA-dependent RNA polymerase catalyzes the transcription of DNA into RNA using the four ribonucleoside triphosphates as substrates. The sequence is that of DNA-directed RNA polymerase subunit beta' from Prosthecochloris aestuarii (strain DSM 271 / SK 413).